We begin with the raw amino-acid sequence, 227 residues long: Putative molybdenum transport system permease protein YvgM (227 aa).

5 helical membrane-spanning segments follow: residues 17 to 37 (VVLS…LGTL), 57 to 77 (FMLP…VIFG), 94 to 114 (VIFT…PLMY), 142 to 162 (VFIH…SILS), and 201 to 221 (TLAW…LFFI). An ABC transmembrane type-1 domain is found at 17 to 221 (VVLSFQVAAV…VISFLMLFFI (205 aa)).

It belongs to the binding-protein-dependent transport system permease family. CysTW subfamily.

It is found in the cell membrane. Functionally, could be part of the binding-protein-dependent transport system for molybdenum; probably responsible for the translocation of the substrate across the membrane. This chain is Putative molybdenum transport system permease protein YvgM (yvgM), found in Bacillus subtilis (strain 168).